The chain runs to 148 residues: MVRVLRGLPWRGLWLLLAHQLFLVTACQDAHYGTLMQELCLSRFQKDMEAMERTLWCDWGKTIGSYGELTDCTRNLAERLGCFWPNVEVDRFFVAVHRHYFRSCPASGRALGDPPSTILCPFVVLPITVTLLVTALVVWRSKRAESIV.

Positions 1–26 are cleaved as a signal peptide; sequence MVRVLRGLPWRGLWLLLAHQLFLVTA. 3 cysteine pairs are disulfide-bonded: cysteine 27–cysteine 82, cysteine 40–cysteine 72, and cysteine 57–cysteine 104. The Extracellular portion of the chain corresponds to 27–118; sequence CQDAHYGTLM…RALGDPPSTI (92 aa). The chain crosses the membrane as a helical span at residues 119 to 140; the sequence is LCPFVVLPITVTLLVTALVVWR. Residues 141-148 lie on the Cytoplasmic side of the membrane; sequence SKRAESIV.

The protein belongs to the RAMP family. Heterodimer of CALCRL and RAMP1; the interaction induces allosteric modulation of CALCRL function and CGRP1/CALCA and CGRP2/CALCB ligand specificity. Heterodimer of CALCR and RAMP1; interaction forms the AMYR1 receptor complex for amylin/IAPP and CGRP1/CALCA ligands.

The protein localises to the cell membrane. Functionally, accessory protein that interacts with and modulates the function of G-protein coupled receptors including calcitonin gene-related peptide type 1 receptor (CALCRL) and calcitonin receptor (CALCR). Required for the transport of CALCRL to the plasma membrane. Together with CALCRL, form the receptor complex for the calcitonin gene-related peptides CGRP1/CALCA and CGRP2/CALCB. Together with CALCR, form the AMYR1 receptor complex for amylin/IAPP and CGRP1/CALCA. The polypeptide is Receptor activity-modifying protein 1 (RAMP1) (Cavia porcellus (Guinea pig)).